The sequence spans 75 residues: Large ribosomal subunit protein bL31 (75 aa).

Belongs to the bacterial ribosomal protein bL31 family. Type A subfamily. In terms of assembly, part of the 50S ribosomal subunit.

Its function is as follows. Binds the 23S rRNA. The chain is Large ribosomal subunit protein bL31 from Chlorobium limicola (strain DSM 245 / NBRC 103803 / 6330).